Consider the following 504-residue polypeptide: ATP synthase subunit alpha (504 aa).

170–177 (GDRQTGKT) is a binding site for ATP.

It belongs to the ATPase alpha/beta chains family. In terms of assembly, F-type ATPases have 2 components, CF(1) - the catalytic core - and CF(0) - the membrane proton channel. CF(1) has five subunits: alpha(3), beta(3), gamma(1), delta(1), epsilon(1). CF(0) has four main subunits: a(1), b(1), b'(1) and c(9-12).

Its subcellular location is the cellular thylakoid membrane. It carries out the reaction ATP + H2O + 4 H(+)(in) = ADP + phosphate + 5 H(+)(out). Its function is as follows. Produces ATP from ADP in the presence of a proton gradient across the membrane. The alpha chain is a regulatory subunit. This Prochlorococcus marinus (strain NATL1A) protein is ATP synthase subunit alpha.